The sequence spans 209 residues: Cytidylate kinase (209 aa).

7–15 serves as a coordination point for ATP; sequence GVAASGKSS.

This sequence belongs to the cytidylate kinase family. Type 1 subfamily.

The protein localises to the cytoplasm. The enzyme catalyses CMP + ATP = CDP + ADP. It carries out the reaction dCMP + ATP = dCDP + ADP. The polypeptide is Cytidylate kinase (Deinococcus geothermalis (strain DSM 11300 / CIP 105573 / AG-3a)).